The chain runs to 294 residues: RAB7A-interacting MON1-CCZ1 complex subunit 1 (294 aa).

N-acetylalanine is present on Ala-2.

It belongs to the RIMOC1 family. In terms of assembly, interacts with the MON1A-CCZ1B complex. Interacts with GDP-bound RAB7A and promotes its interaction with the MON1A-CCZ1B complex.

It is found in the cytoplasm. It localises to the cytosol. Its function is as follows. Plays an important role in the removal of damaged mitochondria via mitophagy by controlling the stability and localization of RAB7A. Required for the recruitment of RAB7A and ATG9A vesicles to damaged mitochondria and promotes the stability of RAB7A by inhibiting its proteasomal degradation during mitophagy. The chain is RAB7A-interacting MON1-CCZ1 complex subunit 1 from Homo sapiens (Human).